The primary structure comprises 224 residues: Artemin (224 aa).

A signal peptide spans 1–39; sequence MELGLGEPTALSHCLRPRWQPALWPTLAALALLSSVTEA. Residues 40–111 constitute a propeptide that is removed on maturation; that stretch reads SLDPMSRSPA…AALRGARAAR (72 aa). Residues 41 to 124 form a disordered region; that stretch reads LDPMSRSPAS…RSSRARATDA (84 aa). A compositionally biased stretch (pro residues) spans 80-95; the sequence is RPPPQSPQPAPPPPGP. The span at 96–116 shows a compositional bias: low complexity; sequence ALQSPPAALRGARAARAGTRS. Disulfide bonds link cysteine 127–cysteine 192, cysteine 154–cysteine 220, and cysteine 158–cysteine 222. Residue asparagine 206 is glycosylated (N-linked (GlcNAc...) asparagine).

It belongs to the TGF-beta family. GDNF subfamily. In terms of assembly, homodimer; disulfide-linked. Interacts with GFRA3 coreceptor and RET: forms a 2:2:2 ternary complex composed of ARTN ligand, GFRA3 and RET receptor. Cochlea. Expressed at higher level in sesorineural epithelium than in the modiolus region or substantia nigra.

It localises to the secreted. Its function is as follows. Growth factor that supports the survival of sensory and sympathetic peripheral neurons in culture and also supports the survival of dopaminergic neurons of the ventral mid-brain. Acts by binding to its coreceptor, GFRA3, leading to autophosphorylation and activation of the RET receptor. Strong attractant of gut hematopoietic cells thus promoting the formation Peyer's patch-like structures, a major component of the gut-associated lymphoid tissue. This chain is Artemin (Artn), found in Rattus norvegicus (Rat).